We begin with the raw amino-acid sequence, 220 residues long: uncharacterized protein (220 aa).

A signal peptide spans 1-25; the sequence is MSCGTYKRGSLTFLLVVALAVPVFC.

In terms of tissue distribution, nacreous layer of shell (at protein level). Expressed primarily in the mantle with highest level in the mantle pallium and lower level in the mantle edge.

The protein resides in the secreted. This is an uncharacterized protein from Margaritifera margaritifera (Freshwater pearl mussel).